A 4749-amino-acid chain; its full sequence is Dynein heavy chain domain-containing protein 1 (4749 aa).

Low complexity predominate over residues 1–18; it reads MKPHSQTSPPSLPMPSTS. Disordered stretches follow at residues 1-27, 275-308, and 2690-2785; these read MKPH…TQKP, ESSD…KKSS, and ESLA…KLQS. The span at 2696-2716 shows a compositional bias: acidic residues; the sequence is CEEEEVEEEKVPEVESEEEIA. The span at 2738-2749 shows a compositional bias: polar residues; that stretch reads QATTGSFLSENS. The stretch at 3197-3224 forms a coiled coil; that stretch reads CQHQESLIENLVRQHDALKAQQEVFLEQ. The disordered stretch occupies residues 3568-3667; that stretch reads PPKQNRSLEP…SLPSCLTVLS (100 aa). Residues 3578–3593 show a composition bias toward basic and acidic residues; sequence SPKESKEKFHVTKQDS. Residues 3594–3636 are a coiled coil; sequence GDNTEDELEDENNEEEDEANEQRKEQKAEENKIQGENEQEVQE. Residues 3595–3612 are compositionally biased toward acidic residues; it reads DNTEDELEDENNEEEDEA. Over residues 3613–3628 the composition is skewed to basic and acidic residues; that stretch reads NEQRKEQKAEENKIQG. The segment covering 3644 to 3655 has biased composition (low complexity); the sequence is ESSGSHSSLPSE. Residues 3656–3667 are compositionally biased toward polar residues; the sequence is TQSLPSCLTVLS. Coiled coils occupy residues 3818–3838 and 4431–4451; these read MVRT…LEDQ and ERQL…LQAL.

This sequence belongs to the dynein heavy chain family. In terms of tissue distribution, expressed in spermatozoa (at protein level).

It localises to the cell projection. Its subcellular location is the cilium. The protein localises to the flagellum. In terms of biological role, essential for the normal function of sperm flagella axonemes. This is Dynein heavy chain domain-containing protein 1 (Dnhd1) from Mus musculus (Mouse).